The following is a 711-amino-acid chain: DNA topoisomerase 3 (711 aa).

Residues 2–135 (KSLILAEKPS…IRRLWISSVT (134 aa)) form the Toprim domain. Positions 8 and 104 each coordinate Mg(2+). Residues 152-580 (YNDLYYAALA…EMKDFTKDVV (429 aa)) form the Topo IA-type catalytic domain. Residues 186 to 191 (SLGRVQ) form an interaction with DNA region. Y305 serves as the catalytic O-(5'-phospho-DNA)-tyrosine intermediate. Positions 691 to 711 (MNKNEGLDNNPFKDALKNLNL) are disordered.

Belongs to the type IA topoisomerase family. It depends on Mg(2+) as a cofactor.

The enzyme catalyses ATP-independent breakage of single-stranded DNA, followed by passage and rejoining.. Functionally, releases the supercoiling and torsional tension of DNA, which is introduced during the DNA replication and transcription, by transiently cleaving and rejoining one strand of the DNA duplex. Introduces a single-strand break via transesterification at a target site in duplex DNA. The scissile phosphodiester is attacked by the catalytic tyrosine of the enzyme, resulting in the formation of a DNA-(5'-phosphotyrosyl)-enzyme intermediate and the expulsion of a 3'-OH DNA strand. The free DNA strand then undergoes passage around the unbroken strand, thus removing DNA supercoils. Finally, in the religation step, the DNA 3'-OH attacks the covalent intermediate to expel the active-site tyrosine and restore the DNA phosphodiester backbone. This Staphylococcus aureus (strain Mu50 / ATCC 700699) protein is DNA topoisomerase 3.